The sequence spans 57 residues: Putative antitoxin VapB4 (57 aa).

In terms of biological role, possibly the antitoxin component of a type II toxin-antitoxin (TA) system. Its cognate toxin is VapC4 (Potential). The protein is Putative antitoxin VapB4 (vapB4) of Methanocaldococcus jannaschii (strain ATCC 43067 / DSM 2661 / JAL-1 / JCM 10045 / NBRC 100440) (Methanococcus jannaschii).